The following is an 852-amino-acid chain: DNA mismatch repair protein MutS (852 aa).

615–622 (GPNMAGKS) is a binding site for ATP.

The protein belongs to the DNA mismatch repair MutS family.

This protein is involved in the repair of mismatches in DNA. It is possible that it carries out the mismatch recognition step. This protein has a weak ATPase activity. This Thermodesulfovibrio yellowstonii (strain ATCC 51303 / DSM 11347 / YP87) protein is DNA mismatch repair protein MutS.